The primary structure comprises 664 residues: DNA mismatch repair protein MutL (664 aa).

It belongs to the DNA mismatch repair MutL/HexB family.

Functionally, this protein is involved in the repair of mismatches in DNA. It is required for dam-dependent methyl-directed DNA mismatch repair. May act as a 'molecular matchmaker', a protein that promotes the formation of a stable complex between two or more DNA-binding proteins in an ATP-dependent manner without itself being part of a final effector complex. The protein is DNA mismatch repair protein MutL of Clostridium beijerinckii (strain ATCC 51743 / NCIMB 8052) (Clostridium acetobutylicum).